We begin with the raw amino-acid sequence, 318 residues long: Vomeronasal type-1 receptor 45 (318 aa).

Over 1-32 (MSEILFFSPQPLFSHMMNKNSRLHTHSNIKNT) the chain is Extracellular. Residues 33 to 53 (FFSEIGIGILGNSFLLLFHIL) form a helical membrane-spanning segment. At 54–65 (KFIRGHRLRLTD) the chain is on the cytoplasmic side. The helical transmembrane segment at 66 to 86 (LPIGLLSLIHLLMLLLMAFIA) threads the bilayer. Residues 87-109 (TDIFISRRGWDDIICKFLVYLYR) are Extracellular-facing. Cysteines 101 and 188 form a disulfide. Residues 110-130 (VLRGLSLCTTSMLSVLQAIIL) form a helical membrane-spanning segment. Over 131 to 150 (SPRSSCLAKLKHKYPHHISC) the chain is Cytoplasmic. A helical membrane pass occupies residues 151-171 (AIIFLSVLYMLISSHILLSII). Residues 172–206 (ATPNLTRNDFLYVTQSCSILPLSYVMQSMYSTLLA) are Extracellular-facing. The N-linked (GlcNAc...) asparagine glycan is linked to Asn175. Residues 207–227 (LREVFLISLMVLSTLYMVVLL) traverse the membrane as a helical segment. The Cytoplasmic segment spans residues 228 to 254 (CRHRKQAQHLQGTSLSPKASAEQRATQ). Residues 255–275 (TILMLMTFFVLMSIFDSIVSC) form a helical membrane-spanning segment. Residues 276–285 (SRTMFLDDPT) lie on the Extracellular side of the membrane. A helical membrane pass occupies residues 286–306 (SYSIHIFVMHIYATVSPFVFM). At 307-318 (STEKHIVNILRG) the chain is on the cytoplasmic side.

Belongs to the G-protein coupled receptor 1 family. Expressed in a subset of sensory neurons located in the apical layer of the vomeronasal organ.

It is found in the cell membrane. Functionally, putative pheromone receptor implicated in the regulation of social and reproductive behavior. The chain is Vomeronasal type-1 receptor 45 (Vmn1r45) from Mus musculus (Mouse).